A 692-amino-acid polypeptide reads, in one-letter code: Elongation factor G (692 aa).

In terms of domain architecture, tr-type G spans 8–282 (AKTRNIGIMA…AVIDYLPSPL (275 aa)). GTP contacts are provided by residues 17–24 (AHVDAGKT), 81–85 (DTPGH), and 135–138 (NKMD).

It belongs to the TRAFAC class translation factor GTPase superfamily. Classic translation factor GTPase family. EF-G/EF-2 subfamily.

The protein resides in the cytoplasm. Its function is as follows. Catalyzes the GTP-dependent ribosomal translocation step during translation elongation. During this step, the ribosome changes from the pre-translocational (PRE) to the post-translocational (POST) state as the newly formed A-site-bound peptidyl-tRNA and P-site-bound deacylated tRNA move to the P and E sites, respectively. Catalyzes the coordinated movement of the two tRNA molecules, the mRNA and conformational changes in the ribosome. This chain is Elongation factor G, found in Streptococcus uberis (strain ATCC BAA-854 / 0140J).